Reading from the N-terminus, the 321-residue chain is Glucokinase (321 aa).

Residue 8–13 (GDVGGT) participates in ATP binding.

This sequence belongs to the bacterial glucokinase family.

Its subcellular location is the cytoplasm. The catalysed reaction is D-glucose + ATP = D-glucose 6-phosphate + ADP + H(+). This Citrobacter koseri (strain ATCC BAA-895 / CDC 4225-83 / SGSC4696) protein is Glucokinase.